The following is a 550-amino-acid chain: Complement control protein (550 aa).

A signal peptide spans 1–19 (MAFLRQTLWILWTFTMVIG). Sushi domains lie at 23-83 (EKCS…TCNK), 84-150 (KSCP…FCEK), 151-209 (EKCH…TCEL), and 210-268 (AGCK…KCVL). Cystine bridges form between Cys25–Cys68, Cys53–Cys81, Cys86–Cys131, Cys116–Cys148, Cys153–Cys194, Cys180–Cys207, Cys212–Cys254, and Cys240–Cys266. Residues Asn63 and Asn111 are each glycosylated (N-linked (GlcNAc...) asparagine; by host). N-linked (GlcNAc...) asparagine; by host glycosylation is present at Asn197. 3 N-linked (GlcNAc...) asparagine; by host glycosylation sites follow: Asn255, Asn275, and Asn299. The disordered stretch occupies residues 269 to 338 (EDIDDPNNSN…TSEGFNETTT (70 aa)). Composition is skewed to polar residues over residues 288 to 302 (EKPNGNVFQRSNYTE) and 312 to 321 (TAATCDTNCE). Asn334, Asn371, Asn374, and Asn378 each carry an N-linked (GlcNAc...) asparagine; by host glycan. Disordered regions lie at residues 387 to 408 (TPTSQDDATPSIPSVQTPNYNT) and 420 to 516 (IEEG…RPPA). A compositionally biased stretch (polar residues) spans 424-440 (PSNSTTSEKATASTLSH). Asn426, Asn445, Asn455, and Asn483 each carry an N-linked (GlcNAc...) asparagine; by host glycan. Polar residues predominate over residues 450-476 (IYTTLNKTTQLPSTNKPTNSQAKSSTK). The segment covering 484–495 (KTTSNPAISLTD) has biased composition (polar residues). The chain crosses the membrane as a helical span at residues 528–548 (IGLLTAVALTCGLITLFHYLF).

The protein resides in the host membrane. The protein localises to the virion membrane. Its function is as follows. Inhibits the complement component of the host innate immune response. Regulates host C3 convertases, accelerating their decay, and acts as a cofactor for factor I degradation of C4b and C3b. Also binds heparin, and therefore may play two distinct roles when incorporated in virion membranes: immune evasion and host cell binding. This chain is Complement control protein (ORF4), found in Human herpesvirus 8 type P (isolate GK18) (HHV-8).